The primary structure comprises 227 residues: UPF0173 metal-dependent hydrolase Saci_1512 (227 aa).

This sequence belongs to the UPF0173 family.

This chain is UPF0173 metal-dependent hydrolase Saci_1512, found in Sulfolobus acidocaldarius (strain ATCC 33909 / DSM 639 / JCM 8929 / NBRC 15157 / NCIMB 11770).